A 218-amino-acid chain; its full sequence is Chymotrypsin-2 (218 aa).

Positions 1–218 (IVGGTDAPRG…FLDWIQKNQL (218 aa)) constitute a Peptidase S1 domain. Cys-25 and Cys-40 are joined by a disulfide. Active-site charge relay system residues include His-39 and Asp-84. Intrachain disulfides connect Cys-148/Cys-161 and Cys-171/Cys-195. Ser-175 functions as the Charge relay system in the catalytic mechanism.

The protein belongs to the peptidase S1 family.

The protein resides in the secreted. The protein localises to the extracellular space. The catalysed reaction is Preferential cleavage: Tyr-|-Xaa, Trp-|-Xaa, Phe-|-Xaa, Leu-|-Xaa.. This chain is Chymotrypsin-2, found in Vespa crabro (European hornet).